Reading from the N-terminus, the 175-residue chain is Methylated-DNA--protein-cysteine methyltransferase (175 aa).

Catalysis depends on Cys142, which acts as the Nucleophile; methyl group acceptor.

Belongs to the MGMT family.

It localises to the cytoplasm. The catalysed reaction is a 6-O-methyl-2'-deoxyguanosine in DNA + L-cysteinyl-[protein] = S-methyl-L-cysteinyl-[protein] + a 2'-deoxyguanosine in DNA. It carries out the reaction a 4-O-methyl-thymidine in DNA + L-cysteinyl-[protein] = a thymidine in DNA + S-methyl-L-cysteinyl-[protein]. In terms of biological role, involved in the cellular defense against the biological effects of O6-methylguanine (O6-MeG) and O4-methylthymine (O4-MeT) in DNA. Repairs the methylated nucleobase in DNA by stoichiometrically transferring the methyl group to a cysteine residue in the enzyme. This is a suicide reaction: the enzyme is irreversibly inactivated. In Thermococcus barophilus (strain DSM 11836 / MP), this protein is Methylated-DNA--protein-cysteine methyltransferase.